The sequence spans 315 residues: Ribosomal RNA small subunit methyltransferase H (315 aa).

Residues 37–39 (GGH), aspartate 57, phenylalanine 83, aspartate 105, and glutamine 112 contribute to the S-adenosyl-L-methionine site.

It belongs to the methyltransferase superfamily. RsmH family.

It localises to the cytoplasm. It carries out the reaction cytidine(1402) in 16S rRNA + S-adenosyl-L-methionine = N(4)-methylcytidine(1402) in 16S rRNA + S-adenosyl-L-homocysteine + H(+). In terms of biological role, specifically methylates the N4 position of cytidine in position 1402 (C1402) of 16S rRNA. This Pseudomonas putida (strain ATCC 47054 / DSM 6125 / CFBP 8728 / NCIMB 11950 / KT2440) protein is Ribosomal RNA small subunit methyltransferase H.